The sequence spans 422 residues: Adenylosuccinate synthetase (422 aa).

Residues 11–17 and 39–41 contribute to the GTP site; these read GDEGKGK and GHT. D12 (proton acceptor) is an active-site residue. Residues D12 and G39 each contribute to the Mg(2+) site. Residues 12 to 15, 37 to 40, T129, R143, N219, T234, and R298 each bind IMP; these read DEGK and NAGH. H40 (proton donor) is an active-site residue. A substrate-binding site is contributed by 294 to 300; it reads VTTGRKR. GTP-binding positions include R300, 326 to 328, and 411 to 413; these read KLD and GTG.

This sequence belongs to the adenylosuccinate synthetase family. In terms of assembly, homodimer. Mg(2+) is required as a cofactor.

The protein localises to the cytoplasm. It catalyses the reaction IMP + L-aspartate + GTP = N(6)-(1,2-dicarboxyethyl)-AMP + GDP + phosphate + 2 H(+). Its pathway is purine metabolism; AMP biosynthesis via de novo pathway; AMP from IMP: step 1/2. Its function is as follows. Plays an important role in the de novo pathway and in the salvage pathway of purine nucleotide biosynthesis. Catalyzes the first committed step in the biosynthesis of AMP from IMP. The chain is Adenylosuccinate synthetase from Talaromyces marneffei (strain ATCC 18224 / CBS 334.59 / QM 7333) (Penicillium marneffei).